We begin with the raw amino-acid sequence, 181 residues long: Ribosome maturation factor RimP (181 aa).

It belongs to the RimP family.

It localises to the cytoplasm. Functionally, required for maturation of 30S ribosomal subunits. The protein is Ribosome maturation factor RimP of Sphingopyxis alaskensis (strain DSM 13593 / LMG 18877 / RB2256) (Sphingomonas alaskensis).